The following is a 601-amino-acid chain: Probable N-acetylgalactosaminyltransferase 7 (601 aa).

At 1 to 20 the chain is on the cytoplasmic side; that stretch reads MIIARKKLQLQRLWRQRGCR. The helical; Signal-anchor for type II membrane protein transmembrane segment at 21 to 38 threads the bilayer; it reads VATYICLGVLVLFGFVYN. At 39-601 the chain is on the lumenal side; it reads SKGNSMSSIK…FVWKEFYQSS (563 aa). A disordered region spans residues 61-108; that stretch reads DLTNKELPGGPDPNTIFRGSELGNYEPKEPEIPSNQPGEHGKPVPVTD. Asn135 carries an N-linked (GlcNAc...) asparagine glycan. 5 cysteine pairs are disulfide-bonded: Cys146/Cys382, Cys373/Cys452, Cys490/Cys506, Cys529/Cys542, and Cys568/Cys583. The tract at residues 155-265 is catalytic subdomain A; that stretch reads LPTVSVVVVF…TNWLPPLLAP (111 aa). Residues Asp196 and Arg226 each contribute to the substrate site. Mn(2+)-binding residues include Asp249 and His251. The tract at residues 328–390 is catalytic subdomain B; sequence PFRSPTHAGG…PCSHVGHVYR (63 aa). Trp359 serves as a coordination point for substrate. Residue His387 coordinates Mn(2+). Substrate-binding residues include Arg390 and Tyr395. Residues 477-595 form the Ricin B-type lectin domain; sequence DVWGEARNPA…DNERQKFVWK (119 aa).

The protein belongs to the glycosyltransferase 2 family. GalNAc-T subfamily. Mn(2+) serves as cofactor.

Its subcellular location is the golgi apparatus membrane. It functions in the pathway protein modification; protein glycosylation. Its function is as follows. Probable glycopeptide transferase involved in O-linked oligosaccharide biosynthesis. Glycopeptide transferases catalyze the transfer of an N-acetyl-D-galactosamine residue to an already glycosylated peptide. In contrast to other members of the family, it does not act as a peptide transferase that transfers GalNAc onto serine or threonine residue on peptides that have been tested. Some peptide transferase activity is however not excluded, considering that its appropriate peptide substrate may remain unidentified. The protein is Probable N-acetylgalactosaminyltransferase 7 (gly-7) of Caenorhabditis elegans.